We begin with the raw amino-acid sequence, 1390 residues long: Nuclear pore complex protein 14 (1390 aa).

Polar residues-rich tracts occupy residues 434-455 (SQKP…STVF) and 464-521 (LKSS…STPK). 3 disordered regions span residues 434-530 (SQKP…KISD), 851-874 (PSSS…TQAD), and 985-1118 (QEIE…SKAA). Positions 851–864 (PSSSLFSASPSTPS) are enriched in low complexity. Basic and acidic residues predominate over residues 986–1033 (EIEKASSKVETLNKTEEVKDEKSENEVTPDLKSEEPKSLETKVKEEPK). The segment covering 1051 to 1071 (KTPSFSFNSTTTPKSTSSTSS) has biased composition (low complexity). Repeat unit 1 spans residues 1073–1074 (FG). The interval 1073–1373 (FGGGLKTQTP…TPAPTSSVFG (301 aa)) is 17 X 2 AA repeats of F-G. A compositionally biased stretch (polar residues) spans 1078-1090 (KTQTPSSSNSTNI). Repeat 2 spans residues 1091 to 1092 (FG). Positions 1095-1109 (TTTTATPTPASNTSS) are enriched in low complexity. Tandem repeats lie at residues 1111–1112 (FG), 1122–1123 (FG), 1125–1126 (FG), 1163–1164 (FG), 1166–1167 (FG), and 1178–1179 (FG). The disordered stretch occupies residues 1183 to 1280 (TAPTVPNVDD…QASAPATGTS (98 aa)). The span at 1201 to 1210 (NGGGSGGFMS) shows a compositional bias: gly residues. Positions 1231-1243 (TSTGTSASSSSWL) are enriched in low complexity. Residues 1244 to 1245 (FG) form repeat 9. Residues 1264–1280 (TAGSSAQQASAPATGTS) show a composition bias toward low complexity. A run of 8 repeats spans residues 1283 to 1284 (FG), 1289 to 1290 (FG), 1295 to 1296 (FG), 1300 to 1301 (FG), 1315 to 1316 (FG), 1344 to 1345 (FG), 1357 to 1358 (FG), and 1372 to 1373 (FG). The span at 1342 to 1371 (SLFGGGATPQTNTSIFGGGANTTPAPTSSV) shows a compositional bias: polar residues. Residues 1342 to 1390 (SLFGGGATPQTNTSIFGGGANTTPAPTSSVFGGGASANANKPTSFTSWR) are disordered. The span at 1378–1390 (ANANKPTSFTSWR) shows a compositional bias: polar residues.

In terms of assembly, interacts with caspase ced-3 (via propeptide); the interaction tethers ced-3 to the nuclear membrane and prevents its autoprocessing in absence of ced-4.

The protein localises to the nucleus. It is found in the nuclear pore complex. Its subcellular location is the nucleus membrane. In terms of biological role, may serve as a docking site in the receptor-mediated import of substrates across the nuclear pore complex. Plays a role in apoptosis by tethering caspase ced-3 to the nuclear membrane preventing its autoprocessing in absence of ced-4. The polypeptide is Nuclear pore complex protein 14 (Caenorhabditis elegans).